The chain runs to 60 residues: Large ribosomal subunit protein uL30 (60 aa).

Belongs to the universal ribosomal protein uL30 family. In terms of assembly, part of the 50S ribosomal subunit.

This chain is Large ribosomal subunit protein uL30, found in Desulfotalea psychrophila (strain LSv54 / DSM 12343).